The sequence spans 322 residues: Serine protease 38 (322 aa).

A signal peptide spans 1–28; it reads MAALTSGLGVLGYLLFPLLLASPTWVTS. Positions 29 to 55 are cleaved as a propeptide — activation peptide; sequence VSRRHPKSQANSLSGDVACGQPVLQGK. A Peptidase S1 domain is found at 56-289; the sequence is LLGGEFARDR…FLSWIRYHLQ (234 aa). Cysteine 81 and cysteine 97 are joined by a disulfide. Catalysis depends on charge relay system residues histidine 96 and aspartate 146. N-linked (GlcNAc...) asparagine glycosylation occurs at asparagine 176. Cystine bridges form between cysteine 179–cysteine 247, cysteine 210–cysteine 226, and cysteine 237–cysteine 265. The active-site Charge relay system is the serine 241. 2 N-linked (GlcNAc...) asparagine glycosylation sites follow: asparagine 250 and asparagine 276.

It belongs to the peptidase S1 family.

The protein localises to the secreted. In Mus musculus (Mouse), this protein is Serine protease 38 (Prss38).